A 422-amino-acid polypeptide reads, in one-letter code: Gamma-glutamyl phosphate reductase (422 aa).

The protein belongs to the gamma-glutamyl phosphate reductase family.

The protein resides in the cytoplasm. It catalyses the reaction L-glutamate 5-semialdehyde + phosphate + NADP(+) = L-glutamyl 5-phosphate + NADPH + H(+). It functions in the pathway amino-acid biosynthesis; L-proline biosynthesis; L-glutamate 5-semialdehyde from L-glutamate: step 2/2. Its function is as follows. Catalyzes the NADPH-dependent reduction of L-glutamate 5-phosphate into L-glutamate 5-semialdehyde and phosphate. The product spontaneously undergoes cyclization to form 1-pyrroline-5-carboxylate. The protein is Gamma-glutamyl phosphate reductase of Saccharophagus degradans (strain 2-40 / ATCC 43961 / DSM 17024).